A 454-amino-acid chain; its full sequence is Exopolyphosphatase PRUNE1 (454 aa).

Methionine 1 is modified (N-acetylmethionine). Mn(2+) contacts are provided by aspartate 28, aspartate 30, aspartate 106, and aspartate 179. Residues 106-108 (DHH) carry the DHH motif motif. The interval 394–421 (SLIAGLSQDDEDPPLPPTPMNSLVDECP) is essential for homodimerization. The interval 398-421 (GLSQDDEDPPLPPTPMNSLVDECP) is disordered. Serine 400 is subject to Phosphoserine. Threonine 411 is modified (phosphothreonine). The residue at position 415 (serine 415) is a Phosphoserine.

This sequence belongs to the PPase class C family. Prune subfamily. In terms of assembly, homooligomer. Able to homodimerize via its C-terminal domain. Interacts with NME1. Interacts with GSK3; at focal adhesion complexes where paxillin and vinculin are colocalized. Interacts with alpha and beta tubulin. Requires Mn(2+) as cofactor.

The protein resides in the cytoplasm. The protein localises to the nucleus. Its subcellular location is the cell junction. It is found in the focal adhesion. It catalyses the reaction diphosphate + H2O = 2 phosphate + H(+). With respect to regulation, activated by magnesium ions and inhibited by manganese ions. Inhibited by dipyridamole, moderately sensitive to IBMX and inhibited by vinpocetine. Functionally, phosphodiesterase (PDE) that has higher activity toward cAMP than cGMP, as substrate. Plays a role in cell proliferation, migration and differentiation, and acts as a negative regulator of NME1. Plays a role in the regulation of neurogenesis. Involved in the regulation of microtubule polymerization. The polypeptide is Exopolyphosphatase PRUNE1 (Prune1) (Rattus norvegicus (Rat)).